The sequence spans 144 residues: MASKIVMSSKTVKTSDEILCEGELEKRSDSLFQVWKKKRCVLTADRLRLFSGKTSPAKELFFHSILKVDCVEHTSKYVYFTIVTNYYKEIDFRCTVESCWNAAITMALIDFQNRRALQDFPRYRYQRSESEMPSEPGEQSALGP.

In terms of domain architecture, PH spans 18 to 111; it reads ILCEGELEKR…AAITMALIDF (94 aa). S140 carries the phosphoserine modification.

This sequence belongs to the PHLDA2 family. As to expression, specifically expressed at high levels in extraembryonic tissues in the developing conceptus (at protein level). Expressed in placenta and yolc sac. Expressed at low levels in fetal liver and kidney.

It localises to the cytoplasm. It is found in the membrane. In terms of biological role, plays a role in regulating placenta growth. May act via its PH domain that competes with other PH domain-containing proteins, thereby preventing their binding to membrane lipids. The chain is Pleckstrin homology-like domain family A member 2 (Phlda2) from Mus musculus (Mouse).